The chain runs to 186 residues: MNVSKYVAIFSFVFIQLISVGKVFANADEWMTTFRENIAPTWQQPEHYDLYIPAITWHARFAYDKEKTDRYNERPWGVGFGLSRWDEKGNWHGLYAMAFKDSWNKWEPIAGYGWESTWRPLADENFHLGLGFTAGVTARDNWNYIPLPVLLPLASVGYGPVTFQMTYIPGTYNNGNVYFAWMRFQF.

The N-terminal stretch at M1–A25 is a signal peptide. Residues H58, D101, and S102 contribute to the active site.

Belongs to the lipid A palmitoyltransferase family. In terms of assembly, homodimer.

The protein resides in the cell outer membrane. The enzyme catalyses a lipid A + a 1,2-diacyl-sn-glycero-3-phosphocholine = a hepta-acyl lipid A + a 2-acyl-sn-glycero-3-phosphocholine. It carries out the reaction a lipid IVA + a 1,2-diacyl-sn-glycero-3-phosphocholine = a lipid IVB + a 2-acyl-sn-glycero-3-phosphocholine. It catalyses the reaction a lipid IIA + a 1,2-diacyl-sn-glycero-3-phosphocholine = a lipid IIB + a 2-acyl-sn-glycero-3-phosphocholine. Functionally, transfers a fatty acid residue from the sn-1 position of a phospholipid to the N-linked hydroxyfatty acid chain on the proximal unit of lipid A or its precursors. The chain is Lipid A acyltransferase PagP from Shigella boydii serotype 4 (strain Sb227).